The chain runs to 204 residues: Pyridoxamine 5'-phosphate oxidase YLR456W homolog (204 aa).

FMN contacts are provided by residues 65–66 and Asn-127; that span reads FT.

The protein belongs to the pyridoxamine 5'-phosphate oxidase family. FMN serves as cofactor.

The protein localises to the cytoplasm. Its subcellular location is the nucleus. This chain is Pyridoxamine 5'-phosphate oxidase YLR456W homolog, found in Saccharomyces cerevisiae (strain ATCC 204508 / S288c) (Baker's yeast).